A 697-amino-acid chain; its full sequence is Sialic acid-binding Ig-like lectin 10 (697 aa).

Positions 1-16 (MLLPLLLSSLLGGSQA) are cleaved as a signal peptide. Residues 17–550 (MDGRFWIRVQ…KGLISTAFSN (534 aa)) lie on the Extracellular side of the membrane. The Ig-like V-type domain maps to 18 to 121 (DGRFWIRVQE…DESQYFFRVE (104 aa)). 4 cysteine pairs are disulfide-bonded: C36–C173, C41–C101, C164–C215, and C276–C323. N-linked (GlcNAc...) asparagine glycosylation is present at N100. R119 provides a ligand contact to N-acetylneuraminate. Ig-like C2-type domains are found at residues 146-231 (PDVY…RTVR), 251-339 (PALE…LDLS), and 344-441 (PENL…LSLS). Residues N355 and N364 are each glycosylated (N-linked (GlcNAc...) asparagine). C380 and C425 are joined by a disulfide. Residues N486 and N504 are each glycosylated (N-linked (GlcNAc...) asparagine). A helical membrane pass occupies residues 551–571 (GAFLGIGITALLFLCLALIIM). The Cytoplasmic segment spans residues 572–697 (KILPKRRTQT…QADYAEVKFQ (126 aa)). Positions 595 to 600 (LDYINV) match the ITIM motif 1 motif. Residues 606-697 (PLAQKRNQKA…QADYAEVKFQ (92 aa)) form a disordered region. The span at 620-629 (PRTPLPPGAP) shows a compositional bias: pro residues. Polar residues predominate over residues 650-659 (KSSTQAPESQ). An ITIM motif 2 motif is present at residues 665 to 670 (LHYATL). Y667 carries the post-translational modification Phosphotyrosine.

The protein belongs to the immunoglobulin superfamily. SIGLEC (sialic acid binding Ig-like lectin) family. As to quaternary structure, interacts with PTPN6/SHP-1 upon phosphorylation. Interacts with NCF1. Interacts with CD24; the probable CD24:SIGLEC10 complex is proposed to inhibit HGMB1-mediated tissue damage immune response. Interacts with HMGB1; the interaction is dependent on CD24. Interacts with RIGI, CBL and PTPN11. Post-translationally, phosphorylation of Tyr-667 is involved in binding to PTPN6. Expressed by peripheral blood leukocytes (eosinophils, monocytes and a natural killer cell subpopulation). Isoform 5 is found to be the most abundant isoform. Found in lymph node, lung, ovary and appendix. Isoform 1 is found at high levels and isoform 2 at lower levels in bone marrow, spleen and spinal cord. Isoform 2 is also found in brain. Isoform 4 is specifically found in natural killer cells.

The protein resides in the cell membrane. Its subcellular location is the secreted. Functionally, putative adhesion molecule that mediates sialic-acid dependent binding to cells. Preferentially binds to alpha-2,3- or alpha-2,6-linked sialic acid. The sialic acid recognition site may be masked by cis interactions with sialic acids on the same cell surface. In the immune response, seems to act as an inhibitory receptor upon ligand induced tyrosine phosphorylation by recruiting cytoplasmic phosphatase(s) via their SH2 domain(s) that block signal transduction through dephosphorylation of signaling molecules. Involved in negative regulation of B-cell antigen receptor signaling. The inhibition of B cell activation is dependent on PTPN6/SHP-1. In association with CD24 may be involved in the selective suppression of the immune response to danger-associated molecular patterns (DAMPs) such as HMGB1, HSP70 and HSP90. In association with CD24 may regulate the immune repsonse of natural killer (NK) cells. Plays a role in the control of autoimmunity. During initiation of adaptive immune responses by CD8-alpha(+) dendritic cells inhibits cross-presentation by impairing the formation of MHC class I-peptide complexes. The function seems to implicate recruitment of PTPN6/SHP-1, which dephosphorylates NCF1 of the NADPH oxidase complex consequently promoting phagosomal acidification. The polypeptide is Sialic acid-binding Ig-like lectin 10 (SIGLEC10) (Homo sapiens (Human)).